The sequence spans 275 residues: 4-hydroxy-3-methylbut-2-enyl diphosphate reductase (275 aa).

Position 12 (Cys-12) interacts with [4Fe-4S] cluster. Residues His-36 and His-70 each contribute to the (2E)-4-hydroxy-3-methylbut-2-enyl diphosphate site. Dimethylallyl diphosphate contacts are provided by His-36 and His-70. Residues His-36 and His-70 each contribute to the isopentenyl diphosphate site. Residue Cys-92 participates in [4Fe-4S] cluster binding. His-120 lines the (2E)-4-hydroxy-3-methylbut-2-enyl diphosphate pocket. Dimethylallyl diphosphate is bound at residue His-120. His-120 is a binding site for isopentenyl diphosphate. Glu-122 acts as the Proton donor in catalysis. Thr-158 contacts (2E)-4-hydroxy-3-methylbut-2-enyl diphosphate. Cys-186 provides a ligand contact to [4Fe-4S] cluster. Ser-214, Ser-215, Asn-216, and Ser-258 together coordinate (2E)-4-hydroxy-3-methylbut-2-enyl diphosphate. Dimethylallyl diphosphate-binding residues include Ser-214, Ser-215, Asn-216, and Ser-258. Positions 214, 215, 216, and 258 each coordinate isopentenyl diphosphate.

Belongs to the IspH family. The cofactor is [4Fe-4S] cluster.

It catalyses the reaction isopentenyl diphosphate + 2 oxidized [2Fe-2S]-[ferredoxin] + H2O = (2E)-4-hydroxy-3-methylbut-2-enyl diphosphate + 2 reduced [2Fe-2S]-[ferredoxin] + 2 H(+). The enzyme catalyses dimethylallyl diphosphate + 2 oxidized [2Fe-2S]-[ferredoxin] + H2O = (2E)-4-hydroxy-3-methylbut-2-enyl diphosphate + 2 reduced [2Fe-2S]-[ferredoxin] + 2 H(+). It participates in isoprenoid biosynthesis; dimethylallyl diphosphate biosynthesis; dimethylallyl diphosphate from (2E)-4-hydroxy-3-methylbutenyl diphosphate: step 1/1. It functions in the pathway isoprenoid biosynthesis; isopentenyl diphosphate biosynthesis via DXP pathway; isopentenyl diphosphate from 1-deoxy-D-xylulose 5-phosphate: step 6/6. Functionally, catalyzes the conversion of 1-hydroxy-2-methyl-2-(E)-butenyl 4-diphosphate (HMBPP) into a mixture of isopentenyl diphosphate (IPP) and dimethylallyl diphosphate (DMAPP). Acts in the terminal step of the DOXP/MEP pathway for isoprenoid precursor biosynthesis. This is 4-hydroxy-3-methylbut-2-enyl diphosphate reductase from Sulfurimonas denitrificans (strain ATCC 33889 / DSM 1251) (Thiomicrospira denitrificans (strain ATCC 33889 / DSM 1251)).